Here is a 77-residue protein sequence, read N- to C-terminus: Translation initiation factor IF-1, chloroplastic (77 aa).

The region spanning M1–R71 is the S1-like domain.

It belongs to the IF-1 family. As to quaternary structure, component of the 30S ribosomal translation pre-initiation complex which assembles on the 30S ribosome in the order IF-2 and IF-3, IF-1 and N-formylmethionyl-tRNA(fMet); mRNA recruitment can occur at any time during PIC assembly.

It is found in the plastid. It localises to the chloroplast. Functionally, one of the essential components for the initiation of protein synthesis. Stabilizes the binding of IF-2 and IF-3 on the 30S subunit to which N-formylmethionyl-tRNA(fMet) subsequently binds. Helps modulate mRNA selection, yielding the 30S pre-initiation complex (PIC). Upon addition of the 50S ribosomal subunit IF-1, IF-2 and IF-3 are released leaving the mature 70S translation initiation complex. This chain is Translation initiation factor IF-1, chloroplastic, found in Leucophyllum frutescens (Texas ranger).